Here is a 90-residue protein sequence, read N- to C-terminus: uncharacterized protein (90 aa).

Positions 13–34 are disordered; sequence APEGMGPHHAASSSHHSAQHHH. The chain crosses the membrane as a helical span at residues 52 to 72; the sequence is YKMWFLYALILALIFGVFMWW.

Its subcellular location is the host membrane. This is an uncharacterized protein from Invertebrate iridescent virus 3 (IIV-3).